The primary structure comprises 1130 residues: Putative beta-hexosaminidase (1130 aa).

Residues 1–23 (MKWVKSGVGILGILLIICHAVTS) form the signal peptide. Composition is skewed to low complexity over residues 1001 to 1030 (PGQMRALGQQAGQALRGQGQQTGQQTLPAQ) and 1037 to 1072 (LTGQAAGTGVAGQSGQQPSAAGQGTQQGLPGQQRTG). Disordered stretches follow at residues 1001 to 1075 (PGQM…GVVP) and 1102 to 1130 (QMRGQGQIPQTQGAVAGAGQSRVPQQQAG).

It belongs to the glycosyl hydrolase 20 family. Prismatic layer of shell (at protein level). Expressed primarily in the mantle with highest level in the mantle edge and lower level in the mantle pallium.

The protein localises to the secreted. It carries out the reaction Hydrolysis of terminal non-reducing N-acetyl-D-hexosamine residues in N-acetyl-beta-D-hexosaminides.. It functions in the pathway glycan degradation; chitin degradation. This chain is Putative beta-hexosaminidase, found in Pinctada maxima (Silver-lipped pearl oyster).